The chain runs to 245 residues: Ribonuclease 3 (245 aa).

Residues 18-146 (LSKFLENLSI…FVGAIYLDSG (129 aa)) form the RNase III domain. Residue Glu-59 participates in Mg(2+) binding. The active site involves Asp-63. Residues Asp-132 and Glu-135 each contribute to the Mg(2+) site. The active site involves Glu-135. Residues 173 to 242 (DYKSLLQEYV…AEVALKAMEN (70 aa)) enclose the DRBM domain.

Belongs to the ribonuclease III family. As to quaternary structure, homodimer. The cofactor is Mg(2+).

It localises to the cytoplasm. It carries out the reaction Endonucleolytic cleavage to 5'-phosphomonoester.. Functionally, digests double-stranded RNA. Involved in the processing of primary rRNA transcript to yield the immediate precursors to the large and small rRNAs (23S and 16S). Processes some mRNAs, and tRNAs when they are encoded in the rRNA operon. Processes pre-crRNA and tracrRNA of type II CRISPR loci if present in the organism. The polypeptide is Ribonuclease 3 (Borreliella burgdorferi (strain ATCC 35210 / DSM 4680 / CIP 102532 / B31) (Borrelia burgdorferi)).